The primary structure comprises 21 residues: Dahlein-5.6 (21 aa).

As to expression, expressed by the skin dorsal glands.

The protein resides in the secreted. In terms of biological role, has no antimicrobial activity. Strongly inhibits the formation of NO by neuronal nitric oxide synthase at micromolar concentrations. The protein is Dahlein-5.6 of Ranoidea dahlii (Dahl's aquatic frog).